Consider the following 215-residue polypeptide: Ribose-5-phosphate isomerase A (215 aa).

Residues 26–29 (TGST), 79–82 (DGAD), and 92–95 (KGGG) contribute to the substrate site. The active-site Proton acceptor is Glu-101. Residue Lys-119 coordinates substrate.

Belongs to the ribose 5-phosphate isomerase family. In terms of assembly, homodimer.

It carries out the reaction aldehydo-D-ribose 5-phosphate = D-ribulose 5-phosphate. Its pathway is carbohydrate degradation; pentose phosphate pathway; D-ribose 5-phosphate from D-ribulose 5-phosphate (non-oxidative stage): step 1/1. Its function is as follows. Catalyzes the reversible conversion of ribose-5-phosphate to ribulose 5-phosphate. The chain is Ribose-5-phosphate isomerase A from Stenotrophomonas maltophilia (strain K279a).